Consider the following 610-residue polypeptide: Menin (610 aa).

The interval 214–390 (GVAERSWLYL…SLLEAGEERP (177 aa)) is interaction with FANCD2. The interval 460-552 (REAEAAEAEE…SPPPEGPVLT (93 aa)) is disordered. Residues 484–500 (RRESKPEEPPPPKKPAL) show a composition bias toward basic and acidic residues. Phosphoserine occurs at positions 487 and 543. Residue T594 is modified to Phosphothreonine.

As to quaternary structure, component of the MLL-HCF complex, at least composed of KMT2A/MLL1, MEN1, ASH2L, RBBP5, DPY30, WDR5, HCFC1 and HCFC2. Component of the menin-associated histone methyltransferase complex, at least composed of KMT2B/MLL4, MEN1, ASH2L, RBBP5, DPY30 and WDR5. Interacts with POLR2B. Interacts with POLR2A phosphorylated at 'Ser-5', but not with the unphosphorylated, nor 'Ser-2' phosphorylated POLR2A forms. Interacts with FANCD2 and DBF4. Interacts with JUND (via MBM motif); inhibits the interaction of JUND with MAPK10 and the phosphorylation of JUND by MAP kinases MAPK8 and MAPK10. Interacts with SMAD3, but not with SMAD2, nor SMAD4. Directly interacts with NFKB1, NFKB2 and RELA. Interacts with KMT2A (via MBM motif). The KMT2A-MEN1 complex interacts with PSIP1 with a greater affinity as MEN1 enhances interaction of KMT2A with PSIP1. Interacts with the fusion protein KMT2A-MLLT3. In terms of tissue distribution, ubiquitous.

The protein resides in the nucleus. Functionally, essential component of a MLL/SET1 histone methyltransferase (HMT) complex, a complex that specifically methylates 'Lys-4' of histone H3 (H3K4). Functions as a transcriptional regulator. Binds to the TERT promoter and represses telomerase expression. Plays a role in TGFB1-mediated inhibition of cell-proliferation, possibly regulating SMAD3 transcriptional activity. Represses JUND-mediated transcriptional activation on AP1 sites, as well as that mediated by NFKB subunit RELA. Positively regulates HOXC8 and HOXC6 gene expression. May be involved in normal hematopoiesis through the activation of HOXA9 expression. May be involved in DNA repair. The chain is Menin (MEN1) from Homo sapiens (Human).